The sequence spans 546 residues: Chaperonin GroEL (546 aa).

ATP is bound by residues 30 to 33, lysine 51, 87 to 91, glycine 415, 479 to 481, and aspartate 495; these read TLGP, DGTTT, and NAA. Residues 526–546 are disordered; it reads KKDEPAMPAGGGMGGMGGMDF. Positions 534-546 are enriched in gly residues; the sequence is AGGGMGGMGGMDF.

Belongs to the chaperonin (HSP60) family. As to quaternary structure, forms a cylinder of 14 subunits composed of two heptameric rings stacked back-to-back. Interacts with the co-chaperonin GroES.

It is found in the cytoplasm. It carries out the reaction ATP + H2O + a folded polypeptide = ADP + phosphate + an unfolded polypeptide.. In terms of biological role, together with its co-chaperonin GroES, plays an essential role in assisting protein folding. The GroEL-GroES system forms a nano-cage that allows encapsulation of the non-native substrate proteins and provides a physical environment optimized to promote and accelerate protein folding. The protein is Chaperonin GroEL of Xanthomonas oryzae pv. oryzae (strain MAFF 311018).